Reading from the N-terminus, the 283-residue chain is Methylamine utilization protein MauF (283 aa).

7 helical membrane passes run 37 to 57, 58 to 78, 116 to 136, 143 to 163, 187 to 207, 210 to 230, and 263 to 283; these read FALM…LHSA, MSAT…GGFL, GYAI…WLLF, YMVA…FGFM, IGLL…QTPI, IVTG…IIGI, and VEVD…LLVL.

The protein localises to the cell membrane. Its pathway is one-carbon metabolism; methylamine degradation. The sequence is that of Methylamine utilization protein MauF (mauF) from Methylobacillus flagellatus (strain ATCC 51484 / DSM 6875 / VKM B-1610 / KT).